The chain runs to 2639 residues: BAH and coiled-coil domain-containing protein 1 (2639 aa).

Disordered regions lie at residues 23–49, 84–107, 188–249, 669–702, 716–746, 939–1047, 1104–1331, 1457–1513, 1582–1666, 1722–1776, 1868–1893, and 2057–2119; these read SAAAAARLAPAGPAAQPPAHFQPGKYF, SAASTHPSGPSSSPPEQAYRGSHP, APAH…GKER, FLSSKGPGQSERPDCARSREHDTTHGDGEVRQPP, VSRSEAAYGTNTARQGRAAPAFKGGGGPRST, QRAA…QSTA, SDVH…HSSG, QREL…KKVK, KVKS…LGTE, EVKI…RDAL, FDDNSSFSEEEEDEEEEEEDSGPLSA, and KKVS…DHFL. Composition is skewed to low complexity over residues 24–41 and 84–98; these read AAAAARLAPAGPAAQPPA and SAASTHPSGPSSSPP. 2 stretches are compositionally biased toward basic and acidic residues: residues 211–247 and 679–698; these read GPKDFDRFLVGKELGREKAGKAAEGKERPAAEEDGGK and ERPDCARSREHDTTHGDGEV. Position 222 is an N6-acetyllysine (Lys-222). Residues 946 to 964 show a composition bias toward basic and acidic residues; it reads RKPEDQHLDLEEPAQEKAP. Residues 972-988 show a composition bias toward low complexity; it reads ALTPTAPGAPSPAAGPT. Pro residues predominate over residues 989–1013; the sequence is KLPPCCHPPDPKPPASSPTPPPRPS. A compositionally biased stretch (polar residues) spans 1106–1122; that stretch reads VHSSNLEDPETMQTTAP. Low complexity predominate over residues 1182 to 1198; the sequence is LEGLQELQCAALLEAGG. Residues 1212–1221 show a composition bias toward basic and acidic residues; that stretch reads AREERSREEG. Over residues 1244–1275 the composition is skewed to acidic residues; sequence LEDEGEQPAPEEDELEEDELGQQSMEDSEEDC. A compositionally biased stretch (pro residues) spans 1307–1324; sequence DSPPDPQPPAASGPPSTV. A coiled-coil region spans residues 1439–1473; it reads EVGMRVRLAELQRRYKEKQRELARLQRKHDHERDE. Basic and acidic residues predominate over residues 1457–1475; it reads QRELARLQRKHDHERDESS. Basic residues predominate over residues 1478-1492; sequence PARRGPGRPRKRKHS. The segment covering 1751-1761 has biased composition (basic residues); that stretch reads GKKKAKGKAKG. Positions 1868–1888 are enriched in acidic residues; that stretch reads FDDNSSFSEEEEDEEEEEEDS. The residue at position 2274 (Ser-2274) is a Phosphoserine. 3 disordered regions span residues 2317–2336, 2348–2383, and 2432–2472; these read SDCHSSFSDEDEDGPGLAAG, SSSSSGSSTSSSSGSVSTSSLCSSDNEDSSYSSDDE, and GAGS…ENRP. The span at 2348 to 2371 shows a compositional bias: low complexity; that stretch reads SSSSSGSSTSSSSGSVSTSSLCSS. Residues 2372–2383 show a composition bias toward acidic residues; the sequence is DNEDSSYSSDDE. The segment covering 2432–2442 has biased composition (low complexity); the sequence is GAGSGPSSSSK. The BAH domain maps to 2513-2633; that stretch reads ETLRVGDCAV…PTTGRLVTAD (121 aa).

The chain is BAH and coiled-coil domain-containing protein 1 from Homo sapiens (Human).